The chain runs to 843 residues: Protein P (843 aa).

Positions 1–177 (MPLSYQHFRK…FCGSPYSWEQ (177 aa)) are terminal protein domain (TP). The tract at residues 178 to 346 (DLQHGRLVFQ…YCLCHIVNLI (169 aa)) is spacer. 2 disordered regions span residues 220–269 (KSRL…HNCA) and 291–316 (TSKG…RSRS). Residues 347-690 (EDWGPCTEHG…YLNLYPVARQ (344 aa)) are polymerase/reverse transcriptase domain (RT). Residues 357 to 600 (EHRIRTPRTP…YSLNFMGYVI (244 aa)) enclose the Reverse transcriptase domain. Positions 429, 551, and 552 each coordinate Mg(2+).

The protein belongs to the hepadnaviridae P protein family.

The catalysed reaction is DNA(n) + a 2'-deoxyribonucleoside 5'-triphosphate = DNA(n+1) + diphosphate. The enzyme catalyses Endonucleolytic cleavage to 5'-phosphomonoester.. Its activity is regulated as follows. Activated by host HSP70 and HSP40 in vitro to be able to bind the epsilon loop of the pgRNA. Because deletion of the RNase H region renders the protein partly chaperone-independent, the chaperones may be needed indirectly to relieve occlusion of the RNA-binding site by this domain. Inhibited by several reverse-transcriptase inhibitors: Lamivudine, Adefovir and Entecavir. Functionally, multifunctional enzyme that converts the viral RNA genome into dsDNA in viral cytoplasmic capsids. This enzyme displays a DNA polymerase activity that can copy either DNA or RNA templates, and a ribonuclease H (RNase H) activity that cleaves the RNA strand of RNA-DNA heteroduplexes in a partially processive 3'- to 5'-endonucleasic mode. Neo-synthesized pregenomic RNA (pgRNA) are encapsidated together with the P protein, and reverse-transcribed inside the nucleocapsid. Initiation of reverse-transcription occurs first by binding the epsilon loop on the pgRNA genome, and is initiated by protein priming, thereby the 5'-end of (-)DNA is covalently linked to P protein. Partial (+)DNA is synthesized from the (-)DNA template and generates the relaxed circular DNA (RC-DNA) genome. After budding and infection, the RC-DNA migrates in the nucleus, and is converted into a plasmid-like covalently closed circular DNA (cccDNA). The activity of P protein does not seem to be necessary for cccDNA generation, and is presumably released from (+)DNA by host nuclear DNA repair machinery. This is Protein P from Homo sapiens (Human).